Here is a 463-residue protein sequence, read N- to C-terminus: A-type ATP synthase subunit B (463 aa).

Belongs to the ATPase alpha/beta chains family. As to quaternary structure, has multiple subunits with at least A(3), B(3), C, D, E, F, H, I and proteolipid K(x).

It localises to the cell membrane. Its function is as follows. Component of the A-type ATP synthase that produces ATP from ADP in the presence of a proton gradient across the membrane. The B chain is a regulatory subunit. This Thermococcus gammatolerans (strain DSM 15229 / JCM 11827 / EJ3) protein is A-type ATP synthase subunit B.